Reading from the N-terminus, the 504-residue chain is Probable cytosol aminopeptidase (504 aa).

Mn(2+) is bound by residues lysine 272 and aspartate 277. Lysine 284 is an active-site residue. Residues aspartate 295, aspartate 354, and glutamate 356 each contribute to the Mn(2+) site. The active site involves arginine 358.

It belongs to the peptidase M17 family. Mn(2+) serves as cofactor.

The protein localises to the cytoplasm. The enzyme catalyses Release of an N-terminal amino acid, Xaa-|-Yaa-, in which Xaa is preferably Leu, but may be other amino acids including Pro although not Arg or Lys, and Yaa may be Pro. Amino acid amides and methyl esters are also readily hydrolyzed, but rates on arylamides are exceedingly low.. It carries out the reaction Release of an N-terminal amino acid, preferentially leucine, but not glutamic or aspartic acids.. Presumably involved in the processing and regular turnover of intracellular proteins. Catalyzes the removal of unsubstituted N-terminal amino acids from various peptides. The sequence is that of Probable cytosol aminopeptidase from Chlorobaculum tepidum (strain ATCC 49652 / DSM 12025 / NBRC 103806 / TLS) (Chlorobium tepidum).